We begin with the raw amino-acid sequence, 108 residues long: Cell division topological specificity factor (108 aa).

It belongs to the MinE family.

Functionally, prevents the cell division inhibition by proteins MinC and MinD at internal division sites while permitting inhibition at polar sites. This ensures cell division at the proper site by restricting the formation of a division septum at the midpoint of the long axis of the cell. This chain is Cell division topological specificity factor, found in Prochlorococcus marinus (strain AS9601).